Consider the following 358-residue polypeptide: Carbamoyl phosphate synthase small chain (358 aa).

CPSase stretches follow at residues Met-1 to Gly-168 and Met-1 to Arg-171. Ser-46, Gly-220, and Gly-222 together coordinate L-glutamine. The 187-residue stretch at Arg-172–Lys-358 folds into the Glutamine amidotransferase type-1 domain. The active-site Nucleophile is Cys-247. 5 residues coordinate L-glutamine: Met-248, Gln-251, Asn-289, Gly-291, and Tyr-292. Residues His-332 and Glu-334 contribute to the active site.

Belongs to the CarA family. As to quaternary structure, composed of two chains; the small (or glutamine) chain promotes the hydrolysis of glutamine to ammonia, which is used by the large (or ammonia) chain to synthesize carbamoyl phosphate. Tetramer of heterodimers (alpha,beta)4.

It carries out the reaction hydrogencarbonate + L-glutamine + 2 ATP + H2O = carbamoyl phosphate + L-glutamate + 2 ADP + phosphate + 2 H(+). The enzyme catalyses L-glutamine + H2O = L-glutamate + NH4(+). It functions in the pathway amino-acid biosynthesis; L-arginine biosynthesis; carbamoyl phosphate from bicarbonate: step 1/1. The protein operates within pyrimidine metabolism; UMP biosynthesis via de novo pathway; (S)-dihydroorotate from bicarbonate: step 1/3. In terms of biological role, small subunit of the glutamine-dependent carbamoyl phosphate synthetase (CPSase). CPSase catalyzes the formation of carbamoyl phosphate from the ammonia moiety of glutamine, carbonate, and phosphate donated by ATP, constituting the first step of 2 biosynthetic pathways, one leading to arginine and/or urea and the other to pyrimidine nucleotides. The small subunit (glutamine amidotransferase) binds and cleaves glutamine to supply the large subunit with the substrate ammonia. The protein is Carbamoyl phosphate synthase small chain of Fusobacterium nucleatum subsp. nucleatum (strain ATCC 25586 / DSM 15643 / BCRC 10681 / CIP 101130 / JCM 8532 / KCTC 2640 / LMG 13131 / VPI 4355).